Reading from the N-terminus, the 252-residue chain is Hydroxyacylglutathione hydrolase (252 aa).

His-54, His-56, Asp-58, His-59, His-111, Asp-128, and His-166 together coordinate Zn(2+).

It belongs to the metallo-beta-lactamase superfamily. Glyoxalase II family. Monomer. Zn(2+) serves as cofactor.

It carries out the reaction an S-(2-hydroxyacyl)glutathione + H2O = a 2-hydroxy carboxylate + glutathione + H(+). It functions in the pathway secondary metabolite metabolism; methylglyoxal degradation; (R)-lactate from methylglyoxal: step 2/2. In terms of biological role, thiolesterase that catalyzes the hydrolysis of S-D-lactoyl-glutathione to form glutathione and D-lactic acid. In Vibrio campbellii (strain ATCC BAA-1116), this protein is Hydroxyacylglutathione hydrolase.